The following is a 503-amino-acid chain: UDP-N-acetylmuramoylalanine--D-glutamate ligase (503 aa).

Residue 129–135 (GTNGKTT) coordinates ATP.

It belongs to the MurCDEF family.

It localises to the cytoplasm. The catalysed reaction is UDP-N-acetyl-alpha-D-muramoyl-L-alanine + D-glutamate + ATP = UDP-N-acetyl-alpha-D-muramoyl-L-alanyl-D-glutamate + ADP + phosphate + H(+). It functions in the pathway cell wall biogenesis; peptidoglycan biosynthesis. Functionally, cell wall formation. Catalyzes the addition of glutamate to the nucleotide precursor UDP-N-acetylmuramoyl-L-alanine (UMA). This chain is UDP-N-acetylmuramoylalanine--D-glutamate ligase, found in Burkholderia orbicola (strain MC0-3).